We begin with the raw amino-acid sequence, 366 residues long: DNA replication and repair protein RecF (366 aa).

An ATP-binding site is contributed by 30 to 37 (GRNAQGKT).

The protein belongs to the RecF family.

Its subcellular location is the cytoplasm. In terms of biological role, the RecF protein is involved in DNA metabolism; it is required for DNA replication and normal SOS inducibility. RecF binds preferentially to single-stranded, linear DNA. It also seems to bind ATP. The chain is DNA replication and repair protein RecF from Streptococcus thermophilus (strain CNRZ 1066).